The primary structure comprises 163 residues: MALNLQDKQAIVAEVNEAAKGALSAVIADSRGVTVDKMTELRKAAREAGVSMRVVRNTLLRRAVEGTDFECLTDTFVGPTLIAFSNEHPGAAARLFKDFAKANDKFEIKGAAFEGKIQNVEFLATLPTYEEAIARLMGTMKEAAAGKLARTLAAYRDKLQEAA.

It belongs to the universal ribosomal protein uL10 family. In terms of assembly, part of the ribosomal stalk of the 50S ribosomal subunit. The N-terminus interacts with L11 and the large rRNA to form the base of the stalk. The C-terminus forms an elongated spine to which L12 dimers bind in a sequential fashion forming a multimeric L10(L12)X complex.

In terms of biological role, forms part of the ribosomal stalk, playing a central role in the interaction of the ribosome with GTP-bound translation factors. This chain is Large ribosomal subunit protein uL10, found in Histophilus somni (strain 2336) (Haemophilus somnus).